A 422-amino-acid chain; its full sequence is Serpin A11 (422 aa).

The signal sequence occupies residues 1–24 (MGPVWLWLLIAELLLPVHYQPSSA). The disordered stretch occupies residues 25–45 (HGDKSLGAPQPASHQSLEPAP). N-linked (GlcNAc...) asparagine glycosylation is found at Asn106, Asn169, Asn350, and Asn385.

This sequence belongs to the serpin family.

The protein localises to the secreted. This Rattus norvegicus (Rat) protein is Serpin A11 (Serpina11).